The primary structure comprises 242 residues: Ubiquinone/menaquinone biosynthesis C-methyltransferase UbiE (242 aa).

S-adenosyl-L-methionine contacts are provided by residues Thr-69, Asp-87, and 114–115 (NA).

The protein belongs to the class I-like SAM-binding methyltransferase superfamily. MenG/UbiE family.

It carries out the reaction a 2-demethylmenaquinol + S-adenosyl-L-methionine = a menaquinol + S-adenosyl-L-homocysteine + H(+). The enzyme catalyses a 2-methoxy-6-(all-trans-polyprenyl)benzene-1,4-diol + S-adenosyl-L-methionine = a 5-methoxy-2-methyl-3-(all-trans-polyprenyl)benzene-1,4-diol + S-adenosyl-L-homocysteine + H(+). It participates in quinol/quinone metabolism; menaquinone biosynthesis; menaquinol from 1,4-dihydroxy-2-naphthoate: step 2/2. The protein operates within cofactor biosynthesis; ubiquinone biosynthesis. In terms of biological role, methyltransferase required for the conversion of demethylmenaquinol (DMKH2) to menaquinol (MKH2) and the conversion of 2-polyprenyl-6-methoxy-1,4-benzoquinol (DDMQH2) to 2-polyprenyl-3-methyl-6-methoxy-1,4-benzoquinol (DMQH2). The chain is Ubiquinone/menaquinone biosynthesis C-methyltransferase UbiE from Zymomonas mobilis subsp. mobilis (strain ATCC 31821 / ZM4 / CP4).